We begin with the raw amino-acid sequence, 146 residues long: 3-dehydroquinate dehydratase (146 aa).

Residue Tyr23 is the Proton acceptor of the active site. Substrate-binding residues include Asn75, His81, and Asp88. The active-site Proton donor is His101. Substrate is bound by residues 102–103 and Arg112; that span reads LS.

Belongs to the type-II 3-dehydroquinase family. In terms of assembly, homododecamer.

It carries out the reaction 3-dehydroquinate = 3-dehydroshikimate + H2O. It participates in metabolic intermediate biosynthesis; chorismate biosynthesis; chorismate from D-erythrose 4-phosphate and phosphoenolpyruvate: step 3/7. Catalyzes a trans-dehydration via an enolate intermediate. The sequence is that of 3-dehydroquinate dehydratase from Marinobacter nauticus (strain ATCC 700491 / DSM 11845 / VT8) (Marinobacter aquaeolei).